A 54-amino-acid polypeptide reads, in one-letter code: Large ribosomal subunit protein bL32c (54 aa).

The protein belongs to the bacterial ribosomal protein bL32 family.

It localises to the plastid. The protein localises to the chloroplast. The sequence is that of Large ribosomal subunit protein bL32c from Cucumis sativus (Cucumber).